A 533-amino-acid polypeptide reads, in one-letter code: Calcium/calmodulin-dependent protein kinase type II subunit delta (533 aa).

Residue alanine 2 is modified to N-acetylalanine. A Protein kinase domain is found at 14–272; it reads YQLFEELGKG…ASEALKHPWI (259 aa). ATP-binding positions include 20 to 28 and lysine 43; that span reads LGKGAFSVV. Catalysis depends on aspartate 136, which acts as the Proton acceptor. Positions 283-292 are autoinhibitory domain; the sequence is HRQETVDCLK. Threonine 287 carries the post-translational modification Phosphothreonine; by autocatalysis. Positions 291–301 are calmodulin-binding; sequence LKKFNARRKLK. 2 positions are modified to phosphothreonine; by autocatalysis: threonine 306 and threonine 307. The residue at position 315 (serine 315) is a Phosphoserine. The residue at position 318 (lysine 318) is an N6-acetyllysine. 2 positions are modified to phosphoserine: serine 319 and serine 364. The segment at 337–375 is disordered; sequence TSPKENIPTPALEPQTTVIHNPDGNKESTESSNTTIEDE. Threonine 365 carries the phosphothreonine modification. Serine 367 carries the post-translational modification Phosphoserine. Threonine 370 and threonine 371 each carry phosphothreonine. Residues serine 438, serine 524, and serine 528 each carry the phosphoserine modification.

Belongs to the protein kinase superfamily. CAMK Ser/Thr protein kinase family. CaMK subfamily. In terms of assembly, CAMK2 is composed of 4 different chains: alpha (CAMK2A), beta (CAMK2B), gamma (CAMK2G), and delta (CAMK2D). The different isoforms assemble into homo- or heteromultimeric holoenzymes composed of 12 subunits with two hexameric rings stacked one on top of the other. Interacts with RRAD and CACNB2. Post-translationally, autophosphorylation of Thr-287 following activation by Ca(2+)/calmodulin. Phosphorylation of Thr-287 locks the kinase into an activated state. Expressed in liver.

It localises to the cell membrane. The protein localises to the sarcolemma. Its subcellular location is the sarcoplasmic reticulum membrane. It carries out the reaction L-seryl-[protein] + ATP = O-phospho-L-seryl-[protein] + ADP + H(+). The catalysed reaction is L-threonyl-[protein] + ATP = O-phospho-L-threonyl-[protein] + ADP + H(+). Activated by Ca(2+)/calmodulin. Binding of calmodulin results in conformational change that relieves intrasteric autoinhibition and allows autophosphorylation of Thr-287 which turns the kinase in a constitutively active form and confers to the kinase a Ca(2+)-independent activity. Its function is as follows. Calcium/calmodulin-dependent protein kinase involved in the regulation of Ca(2+) homeostatis and excitation-contraction coupling (ECC) in heart by targeting ion channels, transporters and accessory proteins involved in Ca(2+) influx into the myocyte, Ca(2+) release from the sarcoplasmic reticulum (SR), SR Ca(2+) uptake and Na(+) and K(+) channel transport. Targets also transcription factors and signaling molecules to regulate heart function. In its activated form, is involved in the pathogenesis of dilated cardiomyopathy and heart failure. Contributes to cardiac decompensation and heart failure by regulating SR Ca(2+) release via direct phosphorylation of RYR2 Ca(2+) channel on 'Ser-2808'. In the nucleus, phosphorylates the MEF2 repressor HDAC4, promoting its nuclear export and binding to 14-3-3 protein, and expression of MEF2 and genes involved in the hypertrophic program. Is essential for left ventricular remodeling responses to myocardial infarction. In pathological myocardial remodeling acts downstream of the beta adrenergic receptor signaling cascade to regulate key proteins involved in ECC. Regulates Ca(2+) influx to myocytes by binding and phosphorylating the L-type Ca(2+) channel subunit beta-2 CACNB2. In addition to Ca(2+) channels, can target and regulate the cardiac sarcolemmal Na(+) channel Nav1.5/SCN5A and the K+ channel Kv4.3/KCND3, which contribute to arrhythmogenesis in heart failure. Phosphorylates phospholamban (PLN/PLB), an endogenous inhibitor of SERCA2A/ATP2A2, contributing to the enhancement of SR Ca(2+) uptake that may be important in frequency-dependent acceleration of relaxation (FDAR) and maintenance of contractile function during acidosis. May participate in the modulation of skeletal muscle function in response to exercise, by regulating SR Ca(2+) transport through phosphorylation of PLN/PLB and triadin, a ryanodine receptor-coupling factor. In response to interferon-gamma (IFN-gamma) stimulation, catalyzes phosphorylation of STAT1, stimulating the JAK-STAT signaling pathway. The sequence is that of Calcium/calmodulin-dependent protein kinase type II subunit delta (CAMK2D) from Oryctolagus cuniculus (Rabbit).